The primary structure comprises 181 residues: MSIDALKERIPDFAKDVRLNLSSMASDETLAPQTKYGLFVAAAVATRNPDVIAAMQAVARDNVAPAVIAAAKSAAAIMAMNNVYYRFVHLASNKDYATMPARLRMNVIANPGVDKADFELWSLAVSAINGCGMCIDSHEKVLLAAGVSTAAIQTAVRFAAIIQSVAVSIEAGAADLAMAAE.

Cys-131 serves as the catalytic Proton donor. Cys-131 and Cys-134 are oxidised to a cystine. The active-site Cysteine sulfenic acid (-SOH) intermediate is Cys-134.

The protein belongs to the AhpD family.

It catalyses the reaction N(6)-[(R)-dihydrolipoyl]-L-lysyl-[lipoyl-carrier protein] + a hydroperoxide = N(6)-[(R)-lipoyl]-L-lysyl-[lipoyl-carrier protein] + an alcohol + H2O. Its function is as follows. Antioxidant protein with alkyl hydroperoxidase activity. Required for the reduction of the AhpC active site cysteine residues and for the regeneration of the AhpC enzyme activity. This is Alkyl hydroperoxide reductase AhpD from Rhodopseudomonas palustris (strain BisB18).